Reading from the N-terminus, the 251-residue chain is Dehydration-responsive element-binding protein 1I (251 aa).

The interval 1 to 50 (MCTSKLEEITGEWPPPALQAASTTSSSEPCRRLSPPSSKRPAGRTKFHET) is disordered. A DNA-binding region (AP2/ERF) is located at residues 54 to 114 (VFRGVRRRGR…GRAAACLNFA (61 aa)). Positions 169–198 (ATSEPSAASDDDAVTSSSSTTDADEEASPF) are disordered.

This sequence belongs to the AP2/ERF transcription factor family. ERF subfamily.

It is found in the nucleus. Its function is as follows. Transcriptional activator that binds specifically to the DNA sequence 5'-[AG]CCGAC-3'. Binding to the C-repeat/DRE element mediates high salinity- and dehydration-inducible transcription. The polypeptide is Dehydration-responsive element-binding protein 1I (DREB1I) (Oryza sativa subsp. japonica (Rice)).